Here is a 509-residue protein sequence, read N- to C-terminus: uncharacterized protein (509 aa).

The protein localises to the virion. This is an uncharacterized protein from Acanthamoeba polyphaga mimivirus (APMV).